Reading from the N-terminus, the 502-residue chain is Lipoprotein LipO (502 aa).

An N-terminal signal peptide occupies residues 1–21 (MKIRMRKKWMALPLAAMMIAG). C22 carries the N-palmitoyl cysteine lipid modification. C22 carries S-diacylglycerol cysteine lipidation.

It localises to the cell membrane. The sequence is that of Lipoprotein LipO (lipO) from Bacillus subtilis (strain 168).